Here is a 439-residue protein sequence, read N- to C-terminus: Protein pop-1 (439 aa).

A disordered region spans residues 1 to 38 (MMADEELGDEVKVFRRDEDADDDPMISGETSEQQLADD). Residues 9–18 (DEVKVFRRDE) show a composition bias toward basic and acidic residues. An involved in nuclear asymmetry region spans residues 87–138 (SGLPIMFPMVVPQYLSPNPNINMMNMMTMRAAMAGAPLSPAFPAMFSPNPLF). Position 125 is a phosphoserine; by LIT1 (serine 125). The segment at residues 199-269 (IKKPLNAFMW…SHKEKYPQWS (71 aa)) is a DNA-binding region (HMG box). Positions 254 to 265 (AKKDRESHKEKY) are enriched in basic and acidic residues. Disordered stretches follow at residues 254–298 (AKKD…NNDQ), 329–365 (RSGSELNDGHDGRGTSGGCSSSSESSSPNNNQPMPMN), and 385–439 (SAHL…VCTL). A compositionally biased stretch (basic residues) spans 277 to 286 (NKKKPKRKRD). 2 stretches are compositionally biased toward low complexity: residues 346–365 (GCSSSSESSSPNNNQPMPMN) and 385–400 (SAHLASSHSTGSSGTS). The segment covering 409–420 (SESDVDEDEDID) has biased composition (acidic residues). Polar residues predominate over residues 422-439 (TITQQTQEYIMQESVCTL).

This sequence belongs to the TCF/LEF family. Interacts with hda-1. Interacts with bar-1. Interacts with par-5; the interaction is direct and is enhanced by lit-1-mediated pop-1 phosphorylation. The interaction also leads to the subsequent nuclear export of pop-1. Interacts (when phosphorylated on Ser-125) with lit-1; the interaction is dependent on the beta-catenin-lit-1 complex. Interacts with wrm-1. Post-translationally, phosphorylated on Ser-125 by lit-1 in the beta-catenin-lit-1 complex. Phosphorylation promotes the interaction of pop-1 and par-5 and the subsequent translocation of pop-1 from the nucleus to the cytoplasm.

The protein resides in the nucleus. The protein localises to the cytoplasm. Functionally, part of the Wnt signaling pathway essential for the specification of the mesodermal cell fate in early embryos. Required for asymmetrical division of somatic gonadal precursor descendants which initiate axis formation required to control organ shape. Similarly, involved in asymmetrical division of seam cells, a stem cell-like lineage. Represses expression of target genes via its interaction with hda-1 histone deacetylase. Required for specification of the M lineage-derived coelomocyte and sex myoblast fate. Regulates coelomocyte fate by positively regulating proliferation and ceh-34 and possibly eya-1 expression in M.dlpa and M.drpa precursors. In Caenorhabditis briggsae, this protein is Protein pop-1.